Here is a 446-residue protein sequence, read N- to C-terminus: MSTWPAPSTATPVHATVTVPGSKSQTNRALVLAALAVPQGSSTISGALRSRDTDLMISALQGLGVVVEAPDTDGSDGTELTVSGALAPKAGARIDCGLAGTVLRFVPPVAALTTETVTFDGDEQARARPIAPLLDGLRALGVAIDGDGLPFSVRGQGSVRGGTVEIDASGSSQFVSGLLLSGAAFTEGLTVVHTGGAVPSAPHIAMTVSMLRDAGVEVDDSAADRWRVAPGPIAARHWAVEPDLSNAVPFLAAAVISGGTVRVTGWPTVSTQPAATILSLLTSLGSEVRQGNSHLEVQGATSYDGIDVDLRDVGELAPSVAAMAALASPGSVSRLRGIAHLRGHETDRLAALSAELNRLGGQCEETDDGLVITARQMHGGVWRSYADHRMATAGAIVGLRVPGVEVEDIGTTAKTLPDFPQLWADMLAGQTDLQAGAPHAGRNQGR.

The segment at 1–20 (MSTWPAPSTATPVHATVTVP) is disordered. 3 residues coordinate 3-phosphoshikimate: K23, S24, and R28. Phosphoenolpyruvate is bound at residue K23. Phosphoenolpyruvate contacts are provided by G100 and R128. 6 residues coordinate 3-phosphoshikimate: S171, S172, Q173, S200, E315, and H344. Q173 is a phosphoenolpyruvate binding site. E315 (proton acceptor) is an active-site residue. Phosphoenolpyruvate is bound by residues R348, R389, and K414.

The protein belongs to the EPSP synthase family. In terms of assembly, monomer.

The protein resides in the cytoplasm. The catalysed reaction is 3-phosphoshikimate + phosphoenolpyruvate = 5-O-(1-carboxyvinyl)-3-phosphoshikimate + phosphate. It participates in metabolic intermediate biosynthesis; chorismate biosynthesis; chorismate from D-erythrose 4-phosphate and phosphoenolpyruvate: step 6/7. Its function is as follows. Catalyzes the transfer of the enolpyruvyl moiety of phosphoenolpyruvate (PEP) to the 5-hydroxyl of shikimate-3-phosphate (S3P) to produce enolpyruvyl shikimate-3-phosphate and inorganic phosphate. The protein is 3-phosphoshikimate 1-carboxyvinyltransferase of Mycolicibacterium vanbaalenii (strain DSM 7251 / JCM 13017 / BCRC 16820 / KCTC 9966 / NRRL B-24157 / PYR-1) (Mycobacterium vanbaalenii).